The sequence spans 117 residues: Translation initiation factor 1A (117 aa).

The 76-residue stretch at 17–92 (IRVPLPDRSK…ERGDIVYRYT (76 aa)) folds into the S1-like domain.

This sequence belongs to the eIF-1A family.

Its function is as follows. Seems to be required for maximal rate of protein biosynthesis. Enhances ribosome dissociation into subunits and stabilizes the binding of the initiator Met-tRNA(I) to 40 S ribosomal subunits. The chain is Translation initiation factor 1A from Thermococcus kodakarensis (strain ATCC BAA-918 / JCM 12380 / KOD1) (Pyrococcus kodakaraensis (strain KOD1)).